The chain runs to 146 residues: General odorant-binding protein 19a (146 aa).

The first 22 residues, 1 to 22, serve as a signal peptide directing secretion; the sequence is MKFHLLLVCVAISLGPIPQSEA. 3 disulfide bridges follow: C40–C72, C68–C126, and C113–C135.

The protein belongs to the PBP/GOBP family. As to expression, expressed in adult olfactory system. Expressed exclusively in a subset of chemosensory sensilla on the third antennal segment.

It localises to the secreted. In terms of biological role, present in the aqueous fluid surrounding olfactory sensory dendrites and are thought to aid in the capture and transport of hydrophobic odorants into and through this fluid. This chain is General odorant-binding protein 19a (Obp19a), found in Drosophila melanogaster (Fruit fly).